The sequence spans 439 residues: Xylose isomerase (439 aa).

Active-site residues include H101 and D104. Positions 232, 268, 271, 296, 307, 309, and 339 each coordinate Mg(2+).

This sequence belongs to the xylose isomerase family. In terms of assembly, homotetramer. Requires Mg(2+) as cofactor.

Its subcellular location is the cytoplasm. It catalyses the reaction alpha-D-xylose = alpha-D-xylulofuranose. This Yersinia enterocolitica serotype O:8 / biotype 1B (strain NCTC 13174 / 8081) protein is Xylose isomerase.